We begin with the raw amino-acid sequence, 382 residues long: Porphobilinogen deaminase, chloroplastic (382 aa).

The transit peptide at 1–62 directs the protein to the chloroplast; sequence MDIASSSLSQ…KQSSSGFVKA (62 aa). The dipyrromethane site is built by R80 and S82. S123 carries the post-translational modification Phosphoserine. Dipyrromethane is bound by residues 156–157, 200–206, and 223–229; these read KD, TASLRRK, and RGNVQTR. The active-site Proton donor/acceptor is the D157. C316 is subject to S-(dipyrrolylmethanemethyl)cysteine.

Belongs to the HMBS family. In terms of assembly, monomer. Requires dipyrromethane as cofactor.

Its subcellular location is the plastid. The protein resides in the chloroplast. The enzyme catalyses 4 porphobilinogen + H2O = hydroxymethylbilane + 4 NH4(+). It functions in the pathway porphyrin-containing compound metabolism; protoporphyrin-IX biosynthesis; coproporphyrinogen-III from 5-aminolevulinate: step 2/4. Its pathway is porphyrin-containing compound metabolism; chlorophyll biosynthesis. Inhibited by NH(3), heavy-metal ions, hydroxylamine and 2-bromoporphobilinogen. Not inhibited by N-ethylmaleimide. Tetrapolymerization of the monopyrrole PBG into the hydroxymethylbilane pre-uroporphyrinogen in several discrete steps. This is Porphobilinogen deaminase, chloroplastic (HEMC) from Arabidopsis thaliana (Mouse-ear cress).